Consider the following 134-residue polypeptide: Cytochrome b5 (134 aa).

The Cytochrome b5 heme-binding domain maps to 5-81 (KKVLGFEEVS…MEKYYIGEID (77 aa)). Heme contacts are provided by H40 and H64. The helical transmembrane segment at 107–127 (FMIKILQFLVPILILGLALVV) threads the bilayer.

Belongs to the cytochrome b5 family.

It is found in the endoplasmic reticulum membrane. Its subcellular location is the microsome membrane. Functionally, membrane bound hemoprotein which function as an electron carrier for several membrane bound oxygenases. This is Cytochrome b5 (CYB5) from Brassica oleracea var. botrytis (Cauliflower).